The chain runs to 444 residues: Putative zinc metalloprotease PD_0327 (444 aa).

A Zn(2+)-binding site is contributed by His22. The active site involves Glu23. Position 26 (His26) interacts with Zn(2+). A helical transmembrane segment spans residues 98 to 120 (IAIVAAGPLANLLLCMLLLWVLF). Residues 192-278 (TLELSKLKQP…HPGMIEIRRG (87 aa)) form the PDZ domain. 2 consecutive transmembrane segments (helical) span residues 371–393 (VGWFIYFLSLLSLSLAIINLFPI) and 418–440 (AMAAGQYIGLALLAGLMGLAFYN).

It belongs to the peptidase M50B family. It depends on Zn(2+) as a cofactor.

It localises to the cell inner membrane. The chain is Putative zinc metalloprotease PD_0327 from Xylella fastidiosa (strain Temecula1 / ATCC 700964).